We begin with the raw amino-acid sequence, 328 residues long: Tryptophan--tRNA ligase (328 aa).

ATP contacts are provided by residues 10 to 12 and 18 to 19; these read QAT and GN. Residues 11–19 carry the 'HIGH' region motif; it reads ATGSLHLGN. An L-tryptophan-binding site is contributed by D134. ATP contacts are provided by residues 146–148, I186, and 195–199; these read GED and KMSKS. A 'KMSKS' region motif is present at residues 195-199; the sequence is KMSKS.

The protein belongs to the class-I aminoacyl-tRNA synthetase family. As to quaternary structure, homodimer.

The protein localises to the cytoplasm. It catalyses the reaction tRNA(Trp) + L-tryptophan + ATP = L-tryptophyl-tRNA(Trp) + AMP + diphosphate + H(+). Its function is as follows. Catalyzes the attachment of tryptophan to tRNA(Trp). In Rickettsia bellii (strain RML369-C), this protein is Tryptophan--tRNA ligase.